The chain runs to 7481 residues: Polyketide synthase GfsA (7481 aa).

The interval 24-1020 is loading module (LM); it reads ASDEPIAVIG…ETAEFVRARL (997 aa). The Ketosynthase family 3 (KS3) 1 domain occupies 26-451; that stretch reads DEPIAVIGLS…GTNCHVVVSA (426 aa). A disordered region spans residues 60–80; that stretch reads RVPADRETPPSTEEESADGEA. The active-site For decarboxylation activity of LM is Gln-197. The For acyltransferase activity of LM role is filled by Ser-662. In terms of domain architecture, Carrier 1 spans 945–1020; sequence PDPVETVRQL…ETAEFVRARL (76 aa). Ser-980 bears the O-(pantetheine 4'-phosphoryl)serine mark. A Ketosynthase family 3 (KS3) 2 domain is found at 1038 to 1454; it reads DEPIAVVAMS…GTNAHVILEQ (417 aa). Module regions lie at residues 1038–2517, 2538–4063, 4084–5636, and 5655–7400; these read DEPI…AGEL, EDPI…LQRI, DDPI…GSEV, and DEPV…GEQL. Active-site for beta-ketoacyl synthase 1 activity residues include Cys-1201, His-1336, and His-1376. Positions 2442–2517 constitute a Carrier 2 domain; sequence RVLLDLVRGR…ALAEHLAGEL (76 aa). Ser-2477 is subject to O-(pantetheine 4'-phosphoryl)serine. The Ketosynthase family 3 (KS3) 3 domain occupies 2538 to 2964; the sequence is EDPIAIVAMS…GTNAHVIIEE (427 aa). Active-site for beta-ketoacyl synthase 2 activity residues include Cys-2711, His-2846, and His-2886. A Carrier 3 domain is found at 3988-4063; the sequence is QALQDLVLTE…ATTEYLLQRI (76 aa). Position 4023 is an O-(pantetheine 4'-phosphoryl)serine (Ser-4023). Residues 4084 to 4514 enclose the Ketosynthase family 3 (KS3) 4 domain; sequence DDPIAIVAMG…GTNAHVILEQ (431 aa). Catalysis depends on for beta-ketoacyl synthase 3 activity residues Cys-4261, His-4396, and His-4436. A Carrier 4 domain is found at 5561–5636; that stretch reads TALLDLIRGQ…ALAEYVGSEV (76 aa). Residue Ser-5596 is modified to O-(pantetheine 4'-phosphoryl)serine. The Ketosynthase family 3 (KS3) 5 domain maps to 5655-6081; sequence DEPVAIIGMS…GTNAHVILEQ (427 aa). Active-site for beta-ketoacyl synthase 4 activity residues include Cys-5828, His-5963, and His-6003. Residues 6561–6685 are N-terminal hotdog fold; it reads HPLLGAAVAL…GVLASGAATV (125 aa). A PKS/mFAS DH domain is found at 6561 to 6841; it reads HPLLGAAVAL…LRPVSADTIA (281 aa). His-6593 acts as the Proton acceptor; for dehydratase activity in catalysis. The interval 6700 to 6841 is C-terminal hotdog fold; sequence ATAVDIDGLY…LRPVSADTIA (142 aa). Asp-6761 acts as the Proton donor; for dehydratase activity in catalysis. Positions 7325–7400 constitute a Carrier 5 domain; that stretch reads QELLDFVCEH…LLAGHIGEQL (76 aa). Ser-7360 carries the O-(pantetheine 4'-phosphoryl)serine modification.

Homodimer. The loading module (LM, residues 13-926) dimerizes. LM cross-links to its cognate acyl-carrier domain in a manner that seems physiological; mutation of residues in the 2 domains alters reactions efficiency in a manner predicted by the cross-linked crystal. Pantetheine 4'-phosphate is required as a cofactor.

It participates in antibiotic biosynthesis. Its function is as follows. First protein in the synthesis of the 16-membered macrolide antibiotics FD-891 and FD-892. Composed of 5 modules; the first is a loading module (LM) that synthesizes a starter unit used by the first elongation module for polyketide chain elongation. The starter unit is extended by multiple rounds of addition of malonyl-CoA or methylmalonyl-CoA, and other modifications to help generate the final products. The loading module (residues 1-927, LM with an inactive acyltransferase domain) preferentially decarboxylates malonyl-GfsA acyl carrier protein of the LM (ACP-LM) over methylmalonyl-GfsA ACP-LM and has no activity on malonyl-CoA or methymalonyl-CoA. LM decarboxylates malonyl-ACP-LM better than the malonyl-ACP-1 module of GfsA (i.e. the next module in the same protein) and has no activity on other malonyl-ACP modules. The protein is Polyketide synthase GfsA of Streptomyces halstedii.